The primary structure comprises 106 residues: YcgL domain-containing protein HCH_02617 (106 aa).

A YcgL domain is found at 6–90; that stretch reads RLISIFRSSK…VQDDYMMDVV (85 aa).

The sequence is that of YcgL domain-containing protein HCH_02617 from Hahella chejuensis (strain KCTC 2396).